Here is a 387-residue protein sequence, read N- to C-terminus: Pepsin A-5 (387 aa).

Positions 1-15 (MKWLWVLGLVALSEC) are cleaved as a signal peptide. A propeptide spans 16 to 62 (LVKIPLMKIKSMRENLRESQVLKDYLEKYPRSRAHVLLEQRRNPAVT) (activation peptide). Residues 74–384 (YIGIISIGTP…DRANNRIGLA (311 aa)) enclose the Peptidase A1 domain. Aspartate 92 is an active-site residue. 2 cysteine pairs are disulfide-bonded: cysteine 105–cysteine 110 and cysteine 266–cysteine 270. The active site involves aspartate 275. The cysteines at positions 309 and 343 are disulfide-linked.

It belongs to the peptidase A1 family. In terms of tissue distribution, expressed in glandular chief cells of the neonatal stomach. Expressed in yolk sacs of the placenta (at protein level).

The protein localises to the secreted. The catalysed reaction is Preferential cleavage: hydrophobic, preferably aromatic, residues in P1 and P1' positions. Cleaves 1-Phe-|-Val-2, 4-Gln-|-His-5, 13-Glu-|-Ala-14, 14-Ala-|-Leu-15, 15-Leu-|-Tyr-16, 16-Tyr-|-Leu-17, 23-Gly-|-Phe-24, 24-Phe-|-Phe-25 and 25-Phe-|-Tyr-26 bonds in the B chain of insulin.. Inhibited by pepstatin A. In terms of biological role, shows particularly broad specificity; although bonds involving phenylalanine and leucine are preferred, many others are also cleaved to some extent. May play a role as a specialized neonatal digestive enzyme. In Mus musculus (Mouse), this protein is Pepsin A-5.